The sequence spans 216 residues: Imidazole glycerol phosphate synthase subunit HisH (216 aa).

One can recognise a Glutamine amidotransferase type-1 domain in the interval 2–216 (RVAIIDYGSG…LIANFLKWKP (215 aa)). Cys88 serves as the catalytic Nucleophile. Catalysis depends on residues His196 and Glu198.

In terms of assembly, heterodimer of HisH and HisF.

The protein resides in the cytoplasm. The catalysed reaction is 5-[(5-phospho-1-deoxy-D-ribulos-1-ylimino)methylamino]-1-(5-phospho-beta-D-ribosyl)imidazole-4-carboxamide + L-glutamine = D-erythro-1-(imidazol-4-yl)glycerol 3-phosphate + 5-amino-1-(5-phospho-beta-D-ribosyl)imidazole-4-carboxamide + L-glutamate + H(+). The enzyme catalyses L-glutamine + H2O = L-glutamate + NH4(+). Its pathway is amino-acid biosynthesis; L-histidine biosynthesis; L-histidine from 5-phospho-alpha-D-ribose 1-diphosphate: step 5/9. IGPS catalyzes the conversion of PRFAR and glutamine to IGP, AICAR and glutamate. The HisH subunit catalyzes the hydrolysis of glutamine to glutamate and ammonia as part of the synthesis of IGP and AICAR. The resulting ammonia molecule is channeled to the active site of HisF. The protein is Imidazole glycerol phosphate synthase subunit HisH of Brucella suis biovar 1 (strain 1330).